The chain runs to 332 residues: Alpha/beta hydrolase domain-containing protein aho-3 (332 aa).

Positions 1-15 are enriched in low complexity; that stretch reads MSSGAPSGSSMSSTP. The interval 1-24 is disordered; sequence MSSGAPSGSSMSSTPGSPPPRAGG. Active-site charge relay system residues include serine 191, aspartate 256, and histidine 285.

It belongs to the AB hydrolase superfamily. ABHD17 family. Palmitoylated on cysteine residues located in a cysteine cluster at the N-terminus which promotes membrane localization and localization to sensory neuron endings. Expressed in a subset of neurons including AIY, HSN, ADF, AFD, AWC, AWB and NSM, hypodermis, pharyngeal muscle and intestine.

Its subcellular location is the cell membrane. The protein resides in the cytoplasmic vesicle membrane. It carries out the reaction S-hexadecanoyl-L-cysteinyl-[protein] + H2O = L-cysteinyl-[protein] + hexadecanoate + H(+). Its function is as follows. Hydrolyzes fatty acids from S-acylated cysteine residues in proteins. Acts in sensory neurons including AWC to regulate starvation-induced thermotaxis plasticity and salt learning behavior. The polypeptide is Alpha/beta hydrolase domain-containing protein aho-3 (Caenorhabditis elegans).